The primary structure comprises 288 residues: Oxaloacetate decarboxylase (288 aa).

Residue Ser47 coordinates substrate. Asp85 provides a ligand contact to Mg(2+). Substrate-binding residues include Arg156 and His232.

It belongs to the isocitrate lyase/PEP mutase superfamily. Oxaloacetate decarboxylase family. As to quaternary structure, homotetramer; dimer of dimers. Requires Mg(2+) as cofactor.

It catalyses the reaction oxaloacetate + H(+) = pyruvate + CO2. Catalyzes the decarboxylation of oxaloacetate into pyruvate. Seems to play a role in maintaining cellular concentrations of bicarbonate and pyruvate. The sequence is that of Oxaloacetate decarboxylase from Rhodopseudomonas palustris (strain ATCC BAA-98 / CGA009).